Reading from the N-terminus, the 419-residue chain is Nodulation protein NoeE (419 aa).

Required for the formation of sulfated nod factor. Proposed to transfer activated sulfate (PAPS) to the fucose of the nod factor. This chain is Nodulation protein NoeE (noeE), found in Sinorhizobium fredii (strain NBRC 101917 / NGR234).